The primary structure comprises 95 residues: uncharacterized protein (95 aa).

2 repeat units span residues 67 to 74 (GCGCGCGC) and 85 to 92 (CGGCCGCG). The 2 X 8 AA approximate repeats stretch occupies residues 67-92 (GCGCGCGCATVAAVSPVPCGGCCGCG).

This is an uncharacterized protein from Caenorhabditis elegans.